The primary structure comprises 238 residues: MKTEELYSGKAKTIYKTENPNELISEFRDSLTAFDGKKKSEATNKGYYNAQISKKIFEMLEEEGIKTHYLGMVSGNEMLVKKVDIILIEVIPRNIAAGSITRKYPVEEGTVFKEPVLVFDYKSDEFGDPMINDDIAVVMGIATREEIDFIRSMALKINAILKSYLESNGFLLPDFKLEFGRVDGEIVLADEISCDTCRFWDVETGESMDKDLFRFDKGDLSKAYEKVARRLVPEIFEE.

Belongs to the SAICAR synthetase family.

It carries out the reaction 5-amino-1-(5-phospho-D-ribosyl)imidazole-4-carboxylate + L-aspartate + ATP = (2S)-2-[5-amino-1-(5-phospho-beta-D-ribosyl)imidazole-4-carboxamido]succinate + ADP + phosphate + 2 H(+). The protein operates within purine metabolism; IMP biosynthesis via de novo pathway; 5-amino-1-(5-phospho-D-ribosyl)imidazole-4-carboxamide from 5-amino-1-(5-phospho-D-ribosyl)imidazole-4-carboxylate: step 1/2. The polypeptide is Phosphoribosylaminoimidazole-succinocarboxamide synthase (Methanococcoides burtonii (strain DSM 6242 / NBRC 107633 / OCM 468 / ACE-M)).